We begin with the raw amino-acid sequence, 829 residues long: Spindle-defective protein 2 (829 aa).

Disordered stretches follow at residues 1 to 29 (MNED…DGES), 41 to 104 (EDED…SNDI), 183 to 294 (KKDV…TTSD), and 326 to 471 (RKKR…NGHM). Positions 54–82 (FRLENRYKPSLHTPRELPTIREENREDVR) are enriched in basic and acidic residues. Residues 83–93 (SNTSSRVNTRP) show a composition bias toward polar residues. A compositionally biased stretch (basic and acidic residues) spans 183–216 (KKDVTRKQENVRPGKMMPEKVNDENEPKSRRFSP). Composition is skewed to polar residues over residues 217 to 230 (ERNT…NSTK) and 266 to 294 (PQRT…TTSD). Positions 314 to 332 (VDINLLTALENARKKRDRP) form a coiled coil. 2 stretches are compositionally biased toward low complexity: residues 361–370 (SMTSIVSSST) and 384–408 (NSAT…RVST). Polar residues-rich tracts occupy residues 409–439 (AKND…NSMT) and 448–463 (SVSS…STMT).

Its subcellular location is the cytoplasm. The protein localises to the cytoskeleton. The protein resides in the microtubule organizing center. It localises to the centrosome. It is found in the centriole. Required both for centrosome duplication and maturation. Required for pericentriolar material (PCM) recruitment. In Caenorhabditis briggsae, this protein is Spindle-defective protein 2.